The chain runs to 298 residues: Small ribosomal subunit protein uS2 (298 aa).

The tract at residues 240–298 (AGENWDTQAPGAGVPGSAFAAASAAAATSWEADGGDWAASSAPPAGESWAETQPTEAKW) is disordered. Positions 248-271 (APGAGVPGSAFAAASAAAATSWEA) are enriched in low complexity. Residues 289–298 (AETQPTEAKW) are compositionally biased toward polar residues.

The protein belongs to the universal ribosomal protein uS2 family. In terms of assembly, component of the small ribosomal subunit. Mature ribosomes consist of a small (40S) and a large (60S) subunit. The 40S subunit contains about 33 different proteins and 1 molecule of RNA (18S). The 60S subunit contains about 49 different proteins and 3 molecules of RNA (25S, 5.8S and 5S). Interacts with rps21.

It localises to the cytoplasm. In terms of biological role, required for the assembly and/or stability of the 40S ribosomal subunit. Required for the processing of the 20S rRNA-precursor to mature 18S rRNA in a late step of the maturation of 40S ribosomal subunits. The sequence is that of Small ribosomal subunit protein uS2 (rps0) from Aspergillus clavatus (strain ATCC 1007 / CBS 513.65 / DSM 816 / NCTC 3887 / NRRL 1 / QM 1276 / 107).